A 650-amino-acid polypeptide reads, in one-letter code: MSEAHVYPVKENIKTHTHADNDTYLAMYQQSVTDPEGFWNEHGKIVDWIKPFTKVKSTSFDTGHVDIRWFEDGTLNVSANCIDRHLAEHGDDVAIIWEGDDPADDKTLTFNELHKEVCKFSNALKDQGVRKGDVVCLYMPMVPEAAIAMLACTRIGAVHTVVFGGFSPEALSGRIIDSDAKVVITADEGVRGGRAVPLKKNVDEALTNPEVKTISKVVVLKRTGGNVDWHGHRDVWWHEATAKVSDVCPPEEMKAEDPLFILYTSGSTGKPKGVLHTTGGYLVYAAMTFKYVFDYQPGETFWCTADVGWITGHTYLIYGPLANGAKTILFEGVPNYPNTSRMSEVVDKHQVNILYTAPTAIRALMAKGNEAVAGTSRSSLRIMGSVGEPINPEAWEWYYKTIGNENSPIVDTWWQTETGGILIAPLPGATDLKPGSATRPFFGVQPALVDNMGNILEDTVAEGNLVILDSWPGQMRTVYGDHERFEQTYFSTFKGMYFTSDGARRDEDGYYWITGRVDDVLNVSGHRMGTAEIESALVAHHKIAEAAIVGIPHDIKGQAIYAYITLNDGEFPSAELHKEVKDWVRKEIGPIATPDVLHWTDSLPKTRSGKIMRRILRKIATGDTSNLGDTSTLADPSVVDKLIAEKAELV.

Residues 191 to 194, T311, and N335 contribute to the CoA site; that span reads RGGR. ATP-binding positions include 387 to 389, 411 to 416, D501, and R516; these read GEP and DTWWQT. Residue S524 participates in CoA binding. R527 is an ATP binding site. Mg(2+)-binding residues include V538, H540, and I543. R585 provides a ligand contact to CoA. K610 is subject to N6-acetyllysine.

It belongs to the ATP-dependent AMP-binding enzyme family. The cofactor is Mg(2+). In terms of processing, acetylated. Deacetylation by the SIR2-homolog deacetylase activates the enzyme.

It carries out the reaction acetate + ATP + CoA = acetyl-CoA + AMP + diphosphate. Catalyzes the conversion of acetate into acetyl-CoA (AcCoA), an essential intermediate at the junction of anabolic and catabolic pathways. AcsA undergoes a two-step reaction. In the first half reaction, AcsA combines acetate with ATP to form acetyl-adenylate (AcAMP) intermediate. In the second half reaction, it can then transfer the acetyl group from AcAMP to the sulfhydryl group of CoA, forming the product AcCoA. This is Acetyl-coenzyme A synthetase from Vibrio parahaemolyticus serotype O3:K6 (strain RIMD 2210633).